The chain runs to 235 residues: Probable transcriptional regulatory protein Cla_1081 (235 aa).

It belongs to the TACO1 family.

It localises to the cytoplasm. The polypeptide is Probable transcriptional regulatory protein Cla_1081 (Campylobacter lari (strain RM2100 / D67 / ATCC BAA-1060)).